The following is a 246-amino-acid chain: Dihydroorotate dehydrogenase B (NAD(+)), electron transfer subunit (246 aa).

The FAD-binding FR-type domain maps to 3–97; it reads EKYTVEKVYE…TGPLGNGFNV (95 aa). FAD-binding positions include 50 to 53 and 72 to 73; these read RPIS and GT. Residues cysteine 211, cysteine 216, cysteine 219, and cysteine 231 each contribute to the [2Fe-2S] cluster site.

It belongs to the PyrK family. Heterotetramer of 2 PyrK and 2 PyrD type B subunits. [2Fe-2S] cluster serves as cofactor. It depends on FAD as a cofactor.

It functions in the pathway pyrimidine metabolism; UMP biosynthesis via de novo pathway; orotate from (S)-dihydroorotate (NAD(+) route): step 1/1. Functionally, responsible for channeling the electrons from the oxidation of dihydroorotate from the FMN redox center in the PyrD type B subunit to the ultimate electron acceptor NAD(+). The protein is Dihydroorotate dehydrogenase B (NAD(+)), electron transfer subunit of Clostridium acetobutylicum (strain ATCC 824 / DSM 792 / JCM 1419 / IAM 19013 / LMG 5710 / NBRC 13948 / NRRL B-527 / VKM B-1787 / 2291 / W).